A 354-amino-acid chain; its full sequence is 3-dehydroquinate synthase (354 aa).

NAD(+) is bound by residues 100 to 104 (GATGD), 124 to 125 (TT), Lys-136, Lys-145, and 163 to 166 (FLKT). Glu-178, His-242, and His-256 together coordinate Zn(2+).

It belongs to the sugar phosphate cyclases superfamily. Dehydroquinate synthase family. NAD(+) is required as a cofactor. Requires Co(2+) as cofactor. Zn(2+) serves as cofactor.

The protein resides in the cytoplasm. It catalyses the reaction 7-phospho-2-dehydro-3-deoxy-D-arabino-heptonate = 3-dehydroquinate + phosphate. It functions in the pathway metabolic intermediate biosynthesis; chorismate biosynthesis; chorismate from D-erythrose 4-phosphate and phosphoenolpyruvate: step 2/7. Catalyzes the conversion of 3-deoxy-D-arabino-heptulosonate 7-phosphate (DAHP) to dehydroquinate (DHQ). This is 3-dehydroquinate synthase from Staphylococcus aureus (strain Mu50 / ATCC 700699).